A 471-amino-acid chain; its full sequence is RuvB-like protein 2 (471 aa).

75–82 serves as a coordination point for ATP; that stretch reads GPPSTGKT.

The protein belongs to the RuvB family. As to quaternary structure, probably forms a homohexamer. Interacts with RVB1 and may form heterododecamers with RVB1. Component of the SWR1 chromatin remodeling complex composed of at least ACT1, ARP4, RVB1, RVB2, ARP6, YAF9, VPS71, VPS72, SWC3, SWC4, SWC5, SWC7 and SWR1, and perhaps BDF1. Component of the chromatin-remodeling INO80 complex, at least composed of ARP4, ARP5, ARP8, RVB1, RVB2, TAF14, NHP10, IES1, IES3, IES4, IES6, ACT1, IES2, IES5 and INO80. Also belongs to the R2TP complex composed of at least RVB1, RVB2, TAH1 and PIH1. Interacts with SPT15/TBP.

It localises to the nucleus. Its subcellular location is the nucleoplasm. The catalysed reaction is ATP + H2O = ADP + phosphate + H(+). Its function is as follows. DNA helicase which participates in several chromatin remodeling complexes, including the SWR1 and the INO80 complexes. The SWR1 complex mediates the ATP-dependent exchange of histone H2A for the H2A variant HZT1 leading to transcriptional regulation of selected genes by chromatin remodeling. The INO80 complex remodels chromatin by shifting nucleosomes. Its ability to induce transcription of some phosphate-responsive genes is modulated by inositol polyphosphates. The INO80 complex is involved in DNA repair by associating to 'Ser-129' phosphorylated H2A histones as a response to DNA damage. During transcription may recruit SPT15/TBP to the TATA-boxes of involved genes. Required for box C/D and box H/ACA snoRNA accumulation and involved in pre-rRNA processing. This chain is RuvB-like protein 2 (RVB2), found in Saccharomyces cerevisiae (strain ATCC 204508 / S288c) (Baker's yeast).